Consider the following 210-residue polypeptide: Probable nicotinate-nucleotide adenylyltransferase (210 aa).

Belongs to the NadD family.

The catalysed reaction is nicotinate beta-D-ribonucleotide + ATP + H(+) = deamido-NAD(+) + diphosphate. It participates in cofactor biosynthesis; NAD(+) biosynthesis; deamido-NAD(+) from nicotinate D-ribonucleotide: step 1/1. Catalyzes the reversible adenylation of nicotinate mononucleotide (NaMN) to nicotinic acid adenine dinucleotide (NaAD). This chain is Probable nicotinate-nucleotide adenylyltransferase, found in Streptococcus mutans serotype c (strain ATCC 700610 / UA159).